Reading from the N-terminus, the 645-residue chain is Cyclin-D-binding Myb-like transcription factor 1 (645 aa).

2 disordered regions span residues 34–71 (QNDG…STEY) and 95–119 (RDEE…KKGE). Composition is skewed to acidic residues over residues 36–46 (DGEDLGSDETT) and 95–105 (RDEELESDDLS). One can recognise a Myb-like 1 domain in the interval 219–257 (GKYTDEEINKLKELRQKHGNDWATIGSALGRSASSVKDR). Positions 262-327 (KDTCNTGKWT…KWLNYLNWKQ (66 aa)) constitute an HTH myb-type domain. The H-T-H motif DNA-binding region spans 300–323 (WASVAELVGTRSEKQCRSKWLNYL). Residues 333–382 (WTKEDDINLVRRIAELEVEDENEINWDILASGWSSVRSPQWLRSKWWTIK) enclose the Myb-like 2 domain. The disordered stretch occupies residues 568-645 (VKEEPSENQT…ILENQEEGSN (78 aa)). Basic and acidic residues predominate over residues 587–597 (EQSKQGEKTLD). Over residues 615–625 (IPTNEDISSDS) the composition is skewed to polar residues.

This sequence belongs to the DMTF1 family.

It is found in the nucleus. Transcriptional activator which activates the CDKN2A/ARF locus in response to Ras-Raf signaling, thereby promoting p53/TP53-dependent growth arrest. Binds to the consensus sequence 5'-CCCG[GT]ATGT-3'. The polypeptide is Cyclin-D-binding Myb-like transcription factor 1 (dmtf1) (Danio rerio (Zebrafish)).